The following is a 1059-amino-acid chain: MAAVAGSGAAAAPSSLLLVVGSEFGSPGLLTYVLEELERGIRSWDVDPGVCNLDEQLKVFVSRHSATFSSIVKGQRSLHHRGDNLETLVLLNPSDKSLYDELRNLLLDPASHKLLVLAGPCLEETGELLLQTGGFSPHHFLQVLKDREIRDILATTPPPVQPPILTITCPTFGDWAQLAPAVPGLQGALRLQLRLNPPAQLPNSEGLCEFLEYVAESLEPPSPFELLEPPTSGGFLRLGRPCCYIFPGGLGDAAFFAVNGFTVLVNGGSNPKSSFWKLVRHLDRVDAVLVTHPGADSLPGLNSLLRRKLAERSEVAAGGGSWDDRLRRLISPNLGVVFFNACEAASRLARGEDEAELALSLLAQLGITPLPLSRGPVPAKPTVLFEKMGVGRLDMYVLHPPSAGAERTLASVCALLVWHPAGPGEKVVRVLFPGCTPPACLLDGLVRLQHLRFLREPVVTPQDLEGPGRAESKESVGSRDSSKREGLLATHPRPGQERPGVARKEPARAEAPRKTEKEAKTPRELKKDPKPSVSRTQPREVRRAASSVPNLKKTNAQAAPKPRKAPSTSHSGFPPVANGPRSPPSLRCGEASPPSAACGSPASQLVATPSLELGPIPAGEEKALELPLAASSIPRPRTPSPESHRSPAEGSERLSLSPLRGGEAGPDASPTVTTPTVTTPSLPAEVGSPHSTEVDESLSVSFEQVLPPSAPTSEAGLSLPLRGPRARRSASPHDVDLCLVSPCEFEHRKAVPMAPAPASPGSSNDSSARSQERAGGLGAEETPPTSVSESLPTLSDSDPVPLAPGAADSDEDTEGFGVPRHDPLPDPLKVPPPLPDPSSICMVDPEMLPPKTARQTENVSRTRKPLARPNSRAAAPKATPVAAAKTKGLAGGDRASRPLSARSEPSEKGGRAPLSRKSSTPKTATRGPSGSASSRPGVSATPPKSPVYLDLAYLPSGSSAHLVDEEFFQRVRALCYVISGQDQRKEEGMRAVLDALLASKQHWDRDLQVTLIPTFDSVAMHTWYAETHARHQALGITVLGSNSMVSMQDDAFPACKVEF.

The necessary for the microtubule-organizing center localization stretch occupies residues 1–797 (MAAVAGSGAA…SESLPTLSDS (797 aa)). Serine 321 and serine 472 each carry phosphoserine. Disordered regions lie at residues 461–733 (PQDL…ASPH) and 751–942 (VPMA…SATP). 2 stretches are compositionally biased toward basic and acidic residues: residues 466 to 486 (GPGR…KREG) and 494 to 530 (PGQE…KDPK). Positions 547 to 557 (SVPNLKKTNAQ) are enriched in polar residues. Serine 582 is subject to Phosphoserine. The span at 591–603 (ASPPSAACGSPAS) shows a compositional bias: low complexity. Position 638 is a phosphothreonine (threonine 638). Serine 640 is modified (phosphoserine). Over residues 642-652 (ESHRSPAEGSE) the composition is skewed to basic and acidic residues. 2 positions are modified to phosphoserine: serine 655 and serine 657. Residues 666-1059 (PDASPTVTTP…DAFPACKVEF (394 aa)) form a necessary for interaction with RASSF1 isoform A and isoform C region. Low complexity predominate over residues 670-680 (PTVTTPTVTTP). The segment at 714 to 966 (EAGLSLPLRG…GSSAHLVDEE (253 aa)) is necessary for association with microtubules. Phosphoserine occurs at positions 731 and 759. A compositionally biased stretch (low complexity) spans 759–769 (SPGSSNDSSAR). Over residues 783-796 (PPTSVSESLPTLSD) the composition is skewed to polar residues. At serine 809 the chain carries Phosphoserine. The segment covering 825–836 (PDPLKVPPPLPD) has biased composition (pro residues). 2 stretches are compositionally biased toward low complexity: residues 873-887 (AAAP…AKTK) and 923-936 (TATR…SSRP). The necessary for association with actin stretch occupies residues 960 to 1059 (AHLVDEEFFQ…DAFPACKVEF (100 aa)). Residues 967 to 991 (FFQRVRALCYVISGQDQRKEEGMRA) are necessary for the mitochondrial aggregation and genome destruction.

Belongs to the MAP1 family. Heterodimer of a heavy and a light chain. Interacts with microtubules and actin. Both MAP1S heavy and light chains interact with microtubules. MAP1S light chain interacts with actin. Interacts (via C-terminus) with GAN (via Kelch domains). Interacts with ESR1, LRPPRC, RASSF1 isoform A and isoform C, microtubules and VCY2. Interacts with WDR47 (via N-terminus of light chain). In terms of tissue distribution, expressed in neurons (at protein level). Expressed in spermatocytes, spermatids and spermatozoa. Expressed in the cerebral cortex. Highly expressed in testis. Moderately expressed in the brain, colon, heart, kidney, liver, lung, placenta, small intestine, spleen and stomach. Weakly expressed in muscle.

The protein localises to the nucleus. The protein resides in the cytoplasm. It localises to the cytosol. It is found in the cytoskeleton. Its subcellular location is the spindle. In terms of biological role, microtubule-associated protein that mediates aggregation of mitochondria resulting in cell death and genomic destruction (MAGD). Plays a role in anchoring the microtubule organizing center to the centrosomes. Binds to DNA. Plays a role in apoptosis. Involved in the formation of microtubule bundles. The sequence is that of Microtubule-associated protein 1S (MAP1S) from Homo sapiens (Human).